A 350-amino-acid polypeptide reads, in one-letter code: MVFRIASSPYTHNQRQTSRIMMLVTLATVPGIAVQWYFFGYGSLVQILLAIVSALASEALVIRLRKLPLKSHLGDNSALLTGLLLGVSIPPLAPWWMVVLGTAFAVIIAKQLYGGLGHNPFNPAMIGYVVLLISFPVQMTNWLPPQQIAATAPGFLDALQVIFHGVTASGDTMSQLRLGIDGVSQATPLDTFKTGLHAGHPAGELLAQPIYGGALAGLGWQWVNLAYLAGGLFLLARGTIRWHIPVSFLVTLAVCSTLGWLIAPEKFLSPLMHLLSGATMLGAFFILTDPVTASTTNKGRLVFGALVGLLVWLIRSFGGYPDGVAFAVLLANITVPLIDYYTRPRVYGHR.

A run of 3 helical transmembrane segments spans residues 20-39 (IMML…WYFF), 89-109 (IPPL…VIIA), and 123-143 (PAMI…TNWL). Threonine 187 bears the FMN phosphoryl threonine mark. 5 consecutive transmembrane segments (helical) span residues 215–235 (LAGL…LFLL), 244–264 (IPVS…LIAP), 267–287 (FLSP…FFIL), 301–321 (LVFG…GGYP), and 322–342 (DGVA…DYYT).

Belongs to the NqrB/RnfD family. As to quaternary structure, the complex is composed of six subunits: RnfA, RnfB, RnfC, RnfD, RnfE and RnfG. Requires FMN as cofactor.

Its subcellular location is the cell inner membrane. Part of a membrane-bound complex that couples electron transfer with translocation of ions across the membrane. The chain is Ion-translocating oxidoreductase complex subunit D from Cronobacter sakazakii (strain ATCC BAA-894) (Enterobacter sakazakii).